A 147-amino-acid chain; its full sequence is Small ribosomal subunit protein uS12 (147 aa).

It belongs to the universal ribosomal protein uS12 family. As to quaternary structure, part of the 30S ribosomal subunit.

Its function is as follows. With S4 and S5 plays an important role in translational accuracy. Located at the interface of the 30S and 50S subunits. The polypeptide is Small ribosomal subunit protein uS12 (Methanococcus maripaludis (strain DSM 14266 / JCM 13030 / NBRC 101832 / S2 / LL)).